The sequence spans 92 residues: Small ribosomal subunit protein bS20 (92 aa).

The disordered stretch occupies residues 1–24 (MANTTSAKKATRKIARRTDVNKAR).

It belongs to the bacterial ribosomal protein bS20 family.

Functionally, binds directly to 16S ribosomal RNA. This chain is Small ribosomal subunit protein bS20, found in Rhizobium etli (strain ATCC 51251 / DSM 11541 / JCM 21823 / NBRC 15573 / CFN 42).